Reading from the N-terminus, the 39-residue chain is Cytochrome b559 subunit beta (39 aa).

The chain crosses the membrane as a helical span at residues 14–30 (WLAVHGLAVPTVFFLGS). Heme is bound at residue His-18.

The protein belongs to the PsbE/PsbF family. In terms of assembly, heterodimer of an alpha subunit and a beta subunit. PSII is composed of 1 copy each of membrane proteins PsbA, PsbB, PsbC, PsbD, PsbE, PsbF, PsbH, PsbI, PsbJ, PsbK, PsbL, PsbM, PsbT, PsbX, PsbY, PsbZ, Psb30/Ycf12, at least 3 peripheral proteins of the oxygen-evolving complex and a large number of cofactors. It forms dimeric complexes. Requires heme b as cofactor.

The protein resides in the plastid. The protein localises to the chloroplast thylakoid membrane. This b-type cytochrome is tightly associated with the reaction center of photosystem II (PSII). PSII is a light-driven water:plastoquinone oxidoreductase that uses light energy to abstract electrons from H(2)O, generating O(2) and a proton gradient subsequently used for ATP formation. It consists of a core antenna complex that captures photons, and an electron transfer chain that converts photonic excitation into a charge separation. This chain is Cytochrome b559 subunit beta, found in Pinus koraiensis (Korean pine).